We begin with the raw amino-acid sequence, 381 residues long: Lipid-A-disaccharide synthase (381 aa).

The protein belongs to the LpxB family.

It carries out the reaction a lipid X + a UDP-2-N,3-O-bis[(3R)-3-hydroxyacyl]-alpha-D-glucosamine = a lipid A disaccharide + UDP + H(+). It participates in bacterial outer membrane biogenesis; LPS lipid A biosynthesis. Functionally, condensation of UDP-2,3-diacylglucosamine and 2,3-diacylglucosamine-1-phosphate to form lipid A disaccharide, a precursor of lipid A, a phosphorylated glycolipid that anchors the lipopolysaccharide to the outer membrane of the cell. The sequence is that of Lipid-A-disaccharide synthase from Psychromonas ingrahamii (strain DSM 17664 / CCUG 51855 / 37).